The following is a 972-amino-acid chain: C-1-tetrahydrofolate synthase, mitochondrial (972 aa).

The N-terminal 55 residues, 1-55 (MNVMVSFNQLRNYFLESNSLRPSKWLFQSYGTSSSANILNGKLLARKLQRSVAEE), are a transit peptide targeting the mitochondrion. A methylenetetrahydrofolate dehydrogenase and cyclohydrolase region spans residues 56-340 (VQALKAKDRN…DLNPLELKKP (285 aa)). Residues 84–88 (YVRMK) and 131–133 (VQL) each bind substrate. Residues 202–204 (GRS) and Ser227 contribute to the NADP(+) site. 299 to 303 (PGGVG) contributes to the substrate binding site. The segment at 341–972 (VPSDIEIANS…CENGEIVGLS (632 aa)) is formyltetrahydrofolate synthetase. 405–412 (TPFGEGKS) serves as a coordination point for ATP.

It in the N-terminal section; belongs to the tetrahydrofolate dehydrogenase/cyclohydrolase family. In the C-terminal section; belongs to the formate--tetrahydrofolate ligase family. Homodimer.

It localises to the mitochondrion. The enzyme catalyses (6R)-5,10-methylene-5,6,7,8-tetrahydrofolate + NADP(+) = (6R)-5,10-methenyltetrahydrofolate + NADPH. The catalysed reaction is (6R)-5,10-methenyltetrahydrofolate + H2O = (6R)-10-formyltetrahydrofolate + H(+). It catalyses the reaction (6S)-5,6,7,8-tetrahydrofolate + formate + ATP = (6R)-10-formyltetrahydrofolate + ADP + phosphate. It participates in one-carbon metabolism; tetrahydrofolate interconversion. Functionally, mitochondrial isozyme of C-1-tetrahydrofolate synthase. The trifunctional enzyme catalyzes the interconversion of the one-carbon derivatives of tetrahydrofolate (THF) between different oxidation states by the enzymatic activities 10-formyltetrahydrofolate synthetase, 5,lO-methenyltetrahydrofolate cyclohydrolase, and 5,lO-methylenetetrahydrofolate dehydrogenase. In Schizosaccharomyces pombe (strain 972 / ATCC 24843) (Fission yeast), this protein is C-1-tetrahydrofolate synthase, mitochondrial (ade9).